We begin with the raw amino-acid sequence, 297 residues long: Signal-transducing adaptor protein 1 (297 aa).

The PH domain occupies 25 to 121; the sequence is PLYFEGFLLV…WRGFILTVTE (97 aa). Tyrosine 170 bears the Phosphotyrosine mark. The region spanning 179–273 is the SH2 domain; it reads ECFYAVSRKE…GNLRPFIHSA (95 aa). The segment at 271–297 is disordered; sequence HSADDNFGQDPNIEDRSEKFKKNPHNA.

Interacts with URI1; the interaction is phosphorylation-dependent occurs in a growth-dependent manner. Interacts with KIT and CSF1R. Phosphorylated on tyrosine by TEC. Phosphorylated on tyrosine by KIT. As to expression, expression restricted to the bone marrow.

It is found in the nucleus. The protein localises to the cytoplasm. Its subcellular location is the mitochondrion. In terms of biological role, may function as an adapter molecule downstream of KIT in the proliferation or differentiation of hematopoietic stem cells. The sequence is that of Signal-transducing adaptor protein 1 (Stap1) from Mus musculus (Mouse).